The sequence spans 122 residues: Basic phospholipase A2 homolog ecarpholin S (122 aa).

Cystine bridges form between cysteine 26-cysteine 115, cysteine 28-cysteine 44, cysteine 43-cysteine 95, cysteine 49-cysteine 122, cysteine 50-cysteine 88, cysteine 57-cysteine 81, and cysteine 75-cysteine 86. The tract at residues lysine 105 to glycine 117 is important for membrane-damaging activities in eukaryotes and bacteria; heparin-binding.

In terms of tissue distribution, expressed by the venom gland.

It is found in the secreted. With respect to regulation, suramin inhibits the myotoxic activity. Its function is as follows. Snake venom phospholipase A2 homolog that lacks enzymatic activity. Shows high myotoxin activities and displays edema-inducing activities. The polypeptide is Basic phospholipase A2 homolog ecarpholin S (Echis carinatus (Saw-scaled viper)).